The following is a 164-amino-acid chain: Large ribosomal subunit protein bL9 (164 aa).

It belongs to the bacterial ribosomal protein bL9 family.

Functionally, binds to the 23S rRNA. The polypeptide is Large ribosomal subunit protein bL9 (Borrelia hermsii (strain HS1 / DAH)).